Here is a 121-residue protein sequence, read N- to C-terminus: Natriuretic peptides B (121 aa).

Residues 1–26 (MDLQKVLPQMILLLLFLNLSPLGGHS) form the signal peptide. A disulfide bond links C99 and C115.

The protein belongs to the natriuretic peptide family. In terms of processing, the precursor molecule is proteolytically cleaved by the endoprotease Furin to produce brain natriuretic peptide 45. May undergo further proteolytic cleavage by various proteases such as DPP4, MME and possibly FAP, to give rise to a variety of shorter peptides. May be cleaved at Ser-91 by the prolyl endopeptidase FAP (seprase) activity (in vitro). May be degraded by IDE. During IDE degradation, the resulting products initially increase the activation of NPR1 and can also stimulate NPR2 to produce cGMP before the fragments are completely degraded and inactivated by IDE (in vitro). In terms of tissue distribution, expressed in the atria and ventricles, but at much lower levels than NPPA. Expression levels in the ventricles are slightly higher than in the atria. Very low levels of expression detected in the brain, hypothalamus, lung and aorta. Atria (at protein level). Cardiocytes (at protein level).

Its subcellular location is the secreted. In terms of biological role, cardiac hormone that plays a key role in mediating cardio-renal homeostasis. May also function as a paracrine antifibrotic factor in the heart. Acts by specifically binding and stimulating NPR1 to produce cGMP, which in turn activates effector proteins that drive various biological responses. Likely involved in regulating the extracellular fluid volume and maintaining the fluid-electrolyte balance through natriuresis, diuresis, kaluresis and chloruresis. The chain is Natriuretic peptides B (Nppb) from Rattus norvegicus (Rat).